Consider the following 248-residue polypeptide: Mannosylfructose-phosphate phosphatase (248 aa).

The protein belongs to the sucrose phosphatase family.

It catalyses the reaction beta-D-fructofuranosyl alpha-D-mannopyranoside 6(F)-phosphate + H2O = beta-D-fructofuranosyl alpha-D-mannopyranoside + phosphate. It functions in the pathway carbohydrate metabolism; mannosylfructose biosynthesis; beta-D-fructofuranosyl alpha-D-mannopyranoside from D-fructose 6-phosphate and GDP-alpha-D-mannose: step 2/2. Inhibited by the phosphatase inhibitors fluoride, molybdate and orthovanadate. In Agrobacterium fabrum (strain C58 / ATCC 33970) (Agrobacterium tumefaciens (strain C58)), this protein is Mannosylfructose-phosphate phosphatase.